Consider the following 282-residue polypeptide: Glutamyl endopeptidase (282 aa).

Residues methionine 1 to alanine 27 form the signal peptide. The propeptide occupies lysine 28–serine 66. Catalysis depends on charge relay system residues histidine 117, aspartate 159, and serine 235.

The protein belongs to the peptidase S1B family.

It is found in the secreted. The catalysed reaction is Preferential cleavage: Glu-|-Xaa, Asp-|-Xaa.. In terms of biological role, exhibits a significant hydrolytic activity for the carbonyl side of glutamic acid. Shows activity toward human fibronectin and type 1 collagen. This chain is Glutamyl endopeptidase (gseA), found in Staphylococcus epidermidis (strain ATCC 35984 / DSM 28319 / BCRC 17069 / CCUG 31568 / BM 3577 / RP62A).